The chain runs to 152 residues: Melatonin receptor type 1B (152 aa).

Over 1–12 the chain is Cytoplasmic; sequence HSFVYEKLFSLW. The helical transmembrane segment at 13 to 33 threads the bilayer; the sequence is NTILYVCLIWTLTVVATVPNF. Residues 34 to 57 lie on the Extracellular side of the membrane; that stretch reads FVGSLEYDPRIYSCTFVQTVSSSY. A helical transmembrane segment spans residues 58 to 78; it reads TITVVVIHFILPITVVTFCYL. Residues 79–110 are Cytoplasmic-facing; that stretch reads RIWILVIQVRRKVKSEFKPRMKQSDFRNFLTM. The chain crosses the membrane as a helical span at residues 111 to 131; that stretch reads FVVFVIFAFCWAPLNFIGLAV. The Extracellular portion of the chain corresponds to 132-144; it reads SINPTEVAPKIPE. The helical transmembrane segment at 145-152 threads the bilayer; the sequence is WLFVVSYF.

The protein belongs to the G-protein coupled receptor 1 family.

Its subcellular location is the cell membrane. Its function is as follows. High affinity receptor for melatonin. The activity of this receptor is mediated by pertussis toxin sensitive G proteins that inhibits adenylate cyclase activity. The chain is Melatonin receptor type 1B (mtnr1b) from Xenopus laevis (African clawed frog).